The primary structure comprises 168 residues: Small ribosomal subunit protein uS5 (168 aa).

In terms of domain architecture, S5 DRBM spans 13–76; the sequence is LEENVVAINR…EDAKRKLITV (64 aa).

The protein belongs to the universal ribosomal protein uS5 family. In terms of assembly, part of the 30S ribosomal subunit. Contacts proteins S4 and S8.

With S4 and S12 plays an important role in translational accuracy. In terms of biological role, located at the back of the 30S subunit body where it stabilizes the conformation of the head with respect to the body. The chain is Small ribosomal subunit protein uS5 from Leuconostoc mesenteroides subsp. mesenteroides (strain ATCC 8293 / DSM 20343 / BCRC 11652 / CCM 1803 / JCM 6124 / NCDO 523 / NBRC 100496 / NCIMB 8023 / NCTC 12954 / NRRL B-1118 / 37Y).